We begin with the raw amino-acid sequence, 426 residues long: Alpha-ionylideneethane synthase abl3 (426 aa).

This sequence belongs to the alpha-ionylideneethane synthase family.

The protein operates within hormone biosynthesis. Alpha-ionylideneethane synthase; part of the gene cluster that mediates the biosynthesis of abscisic acid (ABA), a phytohormone that acts antagonistically toward salicylic acid (SA), jasmonic acid (JA) and ethylene (ETH) signaling, to impede plant defense responses. The first step of the pathway catalyzes the reaction from farnesyl diphosphate to alpha-ionylideneethane performed by the alpha-ionylideneethane synthase abl3 via a three-step reaction mechanism involving 2 neutral intermediates, beta-farnesene and allofarnesene. The cytochrome P450 monooxygenase abl1 might then be involved in the conversion of alpha-ionylideneethane to alpha-ionylideneacetic acid. Alpha-ionylideneacetic acid is further converted to abscisic acid in 2 steps involving the cytochrome P450 monooxygenase abl2 and the short-chain dehydrogenase/reductase abl4, via the intermediates 1'-deoxy-ABA or 1',4'-trans-diol-ABA, depending on the order of action of these 2 enzymes. Abl2 is responsible for the hydroxylation of carbon atom C-1' and abl4 might be involved in the oxidation of the C-4' carbon atom. This chain is Alpha-ionylideneethane synthase abl3, found in Leptosphaeria maculans (strain JN3 / isolate v23.1.3 / race Av1-4-5-6-7-8) (Blackleg fungus).